A 117-amino-acid polypeptide reads, in one-letter code: Large ribosomal subunit protein uL18 (117 aa).

The protein belongs to the universal ribosomal protein uL18 family. Part of the 50S ribosomal subunit; part of the 5S rRNA/L5/L18/L25 subcomplex. Contacts the 5S and 23S rRNAs.

In terms of biological role, this is one of the proteins that bind and probably mediate the attachment of the 5S RNA into the large ribosomal subunit, where it forms part of the central protuberance. The polypeptide is Large ribosomal subunit protein uL18 (Aeromonas salmonicida (strain A449)).